We begin with the raw amino-acid sequence, 156 residues long: Small ribosomal subunit protein uS7 (156 aa).

The protein belongs to the universal ribosomal protein uS7 family. In terms of assembly, part of the 30S ribosomal subunit. Contacts proteins S9 and S11.

Its function is as follows. One of the primary rRNA binding proteins, it binds directly to 16S rRNA where it nucleates assembly of the head domain of the 30S subunit. Is located at the subunit interface close to the decoding center, probably blocks exit of the E-site tRNA. The chain is Small ribosomal subunit protein uS7 from Thermodesulfovibrio yellowstonii (strain ATCC 51303 / DSM 11347 / YP87).